The sequence spans 79 residues: Calcium/calmodulin-dependent protein kinase II inhibitor 2 (79 aa).

The interval 43–69 (KRPPKLGQIGRAKRVVIEDDRIDEVLK) is inhibitory domain.

It belongs to the CAMK2N family.

It is found in the nucleus. The protein resides in the cytoplasm. The protein localises to the cytosol. Functionally, potent and specific cellular inhibitor of CaM-kinase II (CAMK2). Traps Ca(2+)/calmodulin on CAMK2. The chain is Calcium/calmodulin-dependent protein kinase II inhibitor 2 (camk2n2) from Xenopus laevis (African clawed frog).